Here is a 687-residue protein sequence, read N- to C-terminus: Protein FAR1-RELATED SEQUENCE 1 (687 aa).

Positions 35 to 137 (EFYKEYANSV…VKEHNHEIFT (103 aa)) constitute an FAR1 domain. Residues 211 to 254 (KAMHGCRPRVILTKHDQMLKEAVLEVFPSSRHCFYMWDTLGQMP) form the MULE domain. The segment at 440–476 (FVVVWNSESSEVVCSCRLFELKGFLCRHAMIVLQMSG) adopts an SWIM-type zinc-finger fold. The stretch at 540 to 562 (NVLNEALRKWENKSNLIQNLEES) forms a coiled coil.

This sequence belongs to the FHY3/FAR1 family. As to expression, expressed in rosette and cauline leaves, inflorescences stems, flowers and siliques.

Its subcellular location is the nucleus. Its function is as follows. Putative transcription activator involved in regulating light control of development. The polypeptide is Protein FAR1-RELATED SEQUENCE 1 (FRS1) (Arabidopsis thaliana (Mouse-ear cress)).